The primary structure comprises 569 residues: Urease subunit alpha (569 aa).

Positions 131–569 constitute a Urease domain; that stretch reads GGIDSHIHFI…LPLAQRYFLF (439 aa). 3 residues coordinate Ni(2+): His136, His138, and Lys219. Lys219 carries the post-translational modification N6-carboxylysine. His221 is a binding site for substrate. Positions 248 and 274 each coordinate Ni(2+). The active-site Proton donor is His322. A Ni(2+)-binding site is contributed by Asp362.

This sequence belongs to the metallo-dependent hydrolases superfamily. Urease alpha subunit family. As to quaternary structure, heterotrimer of UreA (gamma), UreB (beta) and UreC (alpha) subunits. Three heterotrimers associate to form the active enzyme. It depends on Ni cation as a cofactor. Carboxylation allows a single lysine to coordinate two nickel ions.

It localises to the cytoplasm. It catalyses the reaction urea + 2 H2O + H(+) = hydrogencarbonate + 2 NH4(+). Its pathway is nitrogen metabolism; urea degradation; CO(2) and NH(3) from urea (urease route): step 1/1. This Herpetosiphon aurantiacus (strain ATCC 23779 / DSM 785 / 114-95) protein is Urease subunit alpha.